A 990-amino-acid chain; its full sequence is DNA ligase 4 (990 aa).

Residues 57–84 form a disordered region; it reads TQKKGRQPPGPRRKAGPHGHSNLSPHEA. ATP-binding residues include E324, K326, L327, R331, E394, F436, E496, K501, K518, and K520. K326 (N6-AMP-lysine intermediate) is an active-site residue. Residue E394 participates in Mg(2+) binding. E496 lines the Mg(2+) pocket. 2 consecutive BRCT domains span residues 728-821 and 900-989; these read PQSK…LPYL and YMFS…RYQW.

It belongs to the ATP-dependent DNA ligase family. Mg(2+) serves as cofactor.

Its subcellular location is the nucleus. It carries out the reaction ATP + (deoxyribonucleotide)n-3'-hydroxyl + 5'-phospho-(deoxyribonucleotide)m = (deoxyribonucleotide)n+m + AMP + diphosphate.. Functionally, DNA ligase involved in DNA non-homologous end joining (NHEJ); required for double-strand break (DSB) repair. The protein is DNA ligase 4 (LIG4) of Phaeosphaeria nodorum (strain SN15 / ATCC MYA-4574 / FGSC 10173) (Glume blotch fungus).